Reading from the N-terminus, the 2871-residue chain is Desmoplakin (2871 aa).

The interaction with PKP1, JUP, PKP2 stretch occupies residues 1–584 (MSCNGGSHPR…DYMKTIADLE (584 aa)). The interval 1–1056 (MSCNGGSHPR…ANSENCNKNK (1056 aa)) is globular 1. 2 positions are modified to phosphoserine: Ser-22 and Ser-53. Tyr-56 is subject to Phosphotyrosine. Thr-61 carries the phosphothreonine modification. A phosphoserine mark is found at Ser-165, Ser-166, and Ser-176. Spectrin repeat units lie at residues 178 to 271 (SGWD…HLRQ) and 272 to 375 (LQNI…LKEN). The Spectrin 3a repeat unit spans residues 376-446 (AAYFQFFEEA…NLVNKSKKIV (71 aa)). The SH3 domain maps to 458 to 515 (NKPIILRALCDYKQDQKIVHKGDECILKDNNERSKWYVTGPGGVDMLVPSVGLIIPPP). The stretch at 516–545 (NPLAVDLSCKIEQYYEAILALWNQLYINMK) is one Spectrin 3b repeat. Spectrin repeat units lie at residues 546 to 627 (SLVS…IQLP), 654 to 769 (VIET…SLCT), and 770 to 883 (VRAL…DLEK). A coiled-coil region spans residues 1018 to 1945 (SEMLKSLEDL…QREIDKLRQR (928 aa)). The segment at 1057–1945 (FLDQNLQKYQ…QREIDKLRQR (889 aa)) is central fibrous rod domain. Phosphoserine is present on residues Ser-1658, Ser-1708, and Ser-2024. The segment at 1946–2871 (PYGSHRETQT…YSFSSSSIGH (926 aa)) is globular 2. Positions 1960 to 2208 (TVDTSKLVFD…LLLSVQKRSM (249 aa)) are 4.5 X 38 AA tandem repeats (Domain A). 17 Plectin repeats span residues 2009 to 2045 (QPFLRGAGSIAGASASPKEKYSLVEAKRKKLISPEST), 2046 to 2083 (VMLLEAQAATGGIIDPHRNEKLTVDSAIARDLIDFDDR), 2084 to 2121 (QQIYAAEKAITGFDDPFSGKTVSVSEAIKKNLIDRETG), 2122 to 2159 (MRLLEAQIASGGVVDPVNSVFLPKDVALARGLIDRDLY), 2163 to 2197 (NDPRDSQKNFVDPVTKKKVSYVQLKERCRIEPHTG), 2198 to 2233 (LLLLSVQKRSMSFQGIRQPVTVTELVDSGILRPSTV), 2251 to 2288 (KDFLQGSSCIAGIYNETTKQKLGIYEAMKIGLVRPGTA), 2289 to 2326 (LELLEAQAATGFIVDPVSNLRLPVEEAYKRGLVGIEFK), 2327 to 2364 (EKLLSAERAVTGYNDPETGNIISLFQAMNKELIEKGHG), 2365 to 2402 (IRLLEAQIATGGIIDPKESHRLPVDIAYKRGYFNEELS), 2406 to 2440 (SDPSDDTKGFFDPNTEENLTYLQLKERCIKDEETG), 2456 to 2493 (SQKNTLRKRRVVIVDPETNKEMSVQEAYKKGLIDYETF), 2507 to 2544 (TITGSDGSTRVVLVDRKTGSQYDIQDAIDKGLVDRKFF), 2610 to 2647 (SDTLEESSPIAAIFDTENLEKISITEGIERGIVDSITG), 2648 to 2685 (QRLLEAQACTGGIIHPTTGQKLSLQDAVSQGVIDQDMA), 2724 to 2761 (QRFLEFQYLTGGLVDPEVHGRISTEEAIRKGFIDGRAA), and 2762 to 2799 (QRLQDTSSYAKILTCPKTKLKISYKDAINRSMVEDITG). Phosphoserine occurs at positions 2207, 2209, and 2225. Residues 2244–2446 (DEVGERIKDF…EETGLCLLPL (203 aa)) form a 4.5 X 38 AA tandem repeats (Domain B) region. Residues 2609–2822 (FSDTLEESSP…LPSPYNMSSA (214 aa)) form a 4.5 X 38 AA tandem repeats (Domain C) region. Phosphoserine is present on residues Ser-2810 and Ser-2815. A compositionally biased stretch (polar residues) spans 2810–2823 (SKGLPSPYNMSSAP). The segment at 2810–2871 (SKGLPSPYNM…YSFSSSSIGH (62 aa)) is disordered. Tyr-2817 bears the Phosphotyrosine mark. Residues Ser-2820, Ser-2821, and Ser-2825 each carry the phosphoserine modification. Residues 2824-2847 (GSRSGSRSGSRSGSRSGSRSGSRR) are 6 X 4 AA tandem repeats of G-S-R-[SR]. Residues 2824-2847 (GSRSGSRSGSRSGSRSGSRSGSRR) are compositionally biased toward low complexity. Residues Arg-2826 and Arg-2847 each carry the omega-N-methylarginine modification. Ser-2849 is modified (phosphoserine). At Thr-2853 the chain carries Phosphothreonine. The span at 2856–2871 (SSYSYSYSFSSSSIGH) shows a compositional bias: low complexity. Ser-2868 bears the Phosphoserine mark.

This sequence belongs to the plakin or cytolinker family. As to quaternary structure, homodimer. Interacts with COL17A1 (via cytoplasmic region). Interacts with DSC2. Interacts with PKP2. Interacts with PKP1. Interacts weakly with TMEM65. Post-translationally, phosphorylation at Ser-2849 increases association with intermediate filament cytokeratin, potentially facilitating interaction between desmosome junctions and intermediate filament architecture. As to expression, expressed in oral mucosa (at protein level). Expressed in arrector pili muscle (at protein level). Expressed in the heart in the heart (at protein level). Apparently an obligate constituent of all desmosomes. In terms of tissue distribution, resides predominantly in tissues and cells of stratified origin.

The protein resides in the cell junction. The protein localises to the desmosome. It is found in the cell membrane. It localises to the cytoplasm. Major high molecular weight protein of desmosomes. Regulates profibrotic gene expression in cardiomyocytes via activation of the MAPK14/p38 MAPK signaling cascade and increase in TGFB1 protein abundance. This is Desmoplakin (DSP) from Homo sapiens (Human).